The primary structure comprises 104 residues: Large ribosomal subunit protein uL24 (104 aa).

The protein belongs to the universal ribosomal protein uL24 family. Part of the 50S ribosomal subunit. In terms of processing, a methylated and unmethylated form are thought to exist.

In terms of biological role, one of two assembly initiator proteins, it binds directly to the 5'-end of the 23S rRNA, where it nucleates assembly of the 50S subunit. Functionally, one of the proteins that surrounds the polypeptide exit tunnel on the outside of the subunit. The polypeptide is Large ribosomal subunit protein uL24 (Rhodopseudomonas palustris (strain ATCC BAA-98 / CGA009)).